A 421-amino-acid chain; its full sequence is Autophagy-related protein 17 (421 aa).

It belongs to the ATG17 family. Forms a complex with ATG13, ATG29 and CIS1/ATG31. The ATG17-ATG29-ATG31 complex interacts with the ATG1-ATG13 complex. Forms a complex with SNX4 and ATG20. Interacts with ATG11.

It localises to the cytoplasm. Its subcellular location is the preautophagosomal structure membrane. Its function is as follows. Autophagy-specific protein that functions with ATG13, ATG29, and CIS1/ATG31 in response to autophagy-inducing signals as a scaffold to recruit other ATG proteins to organize pre-autophagosomal structure (PAS) formation. Modulates the timing and magnitude of the autophagy response, such as the size of the sequestering vesicles, through interacting with and regulating ATG1 kinase activity. Plays particularly a role in pexophagy and nucleophagy. With ATG13, is required for ATG1 activation by autophosphorylation. Recruits ATG9 to the pre-autophagosomal structure. This is Autophagy-related protein 17 from Kluyveromyces marxianus (strain DMKU3-1042 / BCC 29191 / NBRC 104275) (Yeast).